The primary structure comprises 618 residues: MVVVSLQCAIVGQAGSSFDVEIDDGAKVSKLKDAIKAKKPNDFKVVDADKLHLFLAKQPVEDESGKEVVPVYRPSAEEMKEENLKWLPDEHRAALKLVEGESDDYIHALTAGEPILGSKTLTTWFYTKNNMELPSSEQIHVLVVVPEQGFSVPTVSQDGVFDHCINPFFLQFRTVDKVGDWLEFSSLLPLTRRQKLYIRSSYQVIANHALFNPNVGMVKYAVVTGTPGVGKSVFVYYVLWRLIKEKKRVLLFDNNGLFYFDGSTMLICLALPSKFNEQFWSPDLWCLVDSMDPTSIPGLPYRLCSVLLASTPRRDCIGEFKKQPPTADVFYMPLWSKEELATIAPMYPHAAAVWENRFDCLGGVPRLVLQDIGTNPQALLMSACSSCSLDDCIVLASIHSGVNSKTTIVQTLIHIRSQEPYREYKVVYASDLAMQLIVRTKWQHDRAKLQSLLGSSDGNPLAQSLCGYIFEFYSMDRLEQGGTFVYRELFSKKRKRTPADGTIDIPRSSQPRQVAERVEVGQHAKQLYVPGTSNYTAIDAWMPQFGGFQMTVGKTHDIKGGAADDLAKLGQNGNRLFFLLPPLYYKTFTKKTPQTIKQYAILVPYPEVRNELSASTLQ.

The N-terminal stretch at 1–19 (MVVVSLQCAIVGQAGSSFD) is a signal peptide. The LQLFLAK domain stretch occupies residues 18 to 57 (FDVEIDDGAKVSKLKDAIKAKKPNDFKVVDADKLHLFLAK). Residues 58-139 (QPVEDESGKE…NMELPSSEQI (82 aa)) form a DWL domain region. Positions 140–146 (HVLVVVP) match the HVLVXXP motif motif. Residue Asn534 is glycosylated (N-linked (GlcNAc...) asparagine).

It belongs to the Crinkler effector family.

It is found in the secreted. The protein resides in the host nucleus. In terms of biological role, secreted effector that elicits necrosis in host plants, a characteristic of plant innate immunity. The protein is Crinkler effector protein 16 of Phytophthora infestans (Potato late blight agent).